The sequence spans 96 residues: Large ribosomal subunit protein uL23 (96 aa).

This sequence belongs to the universal ribosomal protein uL23 family. As to quaternary structure, part of the 50S ribosomal subunit. Contacts protein L29, and trigger factor when it is bound to the ribosome.

In terms of biological role, one of the early assembly proteins it binds 23S rRNA. One of the proteins that surrounds the polypeptide exit tunnel on the outside of the ribosome. Forms the main docking site for trigger factor binding to the ribosome. The polypeptide is Large ribosomal subunit protein uL23 (Aster yellows witches'-broom phytoplasma (strain AYWB)).